We begin with the raw amino-acid sequence, 232 residues long: Ribose-5-phosphate isomerase A (232 aa).

Residues 29–32 (SGST), 86–89 (DGAD), and 99–102 (KGGG) each bind substrate. Residue Glu108 is the Proton acceptor of the active site. Lys126 serves as a coordination point for substrate.

This sequence belongs to the ribose 5-phosphate isomerase family. Homodimer.

It catalyses the reaction aldehydo-D-ribose 5-phosphate = D-ribulose 5-phosphate. The protein operates within carbohydrate degradation; pentose phosphate pathway; D-ribose 5-phosphate from D-ribulose 5-phosphate (non-oxidative stage): step 1/1. Catalyzes the reversible conversion of ribose-5-phosphate to ribulose 5-phosphate. The protein is Ribose-5-phosphate isomerase A of Synechococcus sp. (strain ATCC 27144 / PCC 6301 / SAUG 1402/1) (Anacystis nidulans).